The chain runs to 458 residues: Flavonol 3-O-glucosyltransferase UGT76E12 (458 aa).

H25 (proton acceptor) is an active-site residue. Residue H25 participates in an anthocyanidin binding. D118 acts as the Charge relay in catalysis. UDP-alpha-D-glucose-binding residues include T140, A339, Q341, H356, W359, N360, S361, and E364. G379 serves as a coordination point for an anthocyanidin. UDP-alpha-D-glucose-binding residues include D380 and Q381.

Belongs to the UDP-glycosyltransferase family.

It carries out the reaction a flavonol + UDP-alpha-D-glucose = a flavonol 3-O-beta-D-glucoside + UDP + H(+). It catalyses the reaction a 7-O-hydroxy-flavonol + UDP-alpha-D-glucose = a flavonol 7-O-beta-D-glucoside + UDP + H(+). Its function is as follows. Possesses quercetin 3-O-glucosyltransferase and 7-O-glucosyltransferase activities in vitro. The sequence is that of Flavonol 3-O-glucosyltransferase UGT76E12 from Arabidopsis thaliana (Mouse-ear cress).